A 104-amino-acid polypeptide reads, in one-letter code: Large ribosomal subunit protein bL21 (104 aa).

It belongs to the bacterial ribosomal protein bL21 family. As to quaternary structure, part of the 50S ribosomal subunit. Contacts protein L20.

Its function is as follows. This protein binds to 23S rRNA in the presence of protein L20. This Opitutus terrae (strain DSM 11246 / JCM 15787 / PB90-1) protein is Large ribosomal subunit protein bL21.